The chain runs to 135 residues: Photosystem II extrinsic protein U (135 aa).

The N-terminal stretch at 1–29 (MKRLLSWLTGALLMAGLLAGLILPGSVHA) is a signal peptide.

The protein belongs to the PsbU family. In terms of assembly, PSII is composed of 1 copy each of membrane proteins PsbA, PsbB, PsbC, PsbD, PsbE, PsbF, PsbH, PsbI, PsbJ, PsbK, PsbL, PsbM, PsbT, PsbX, PsbY, Psb30/Ycf12, peripheral proteins PsbO, CyanoQ (PsbQ), PsbU, PsbV and a large number of cofactors. It forms dimeric complexes.

The protein resides in the cellular thylakoid membrane. One of the extrinsic, lumenal subunits of photosystem II (PSII). PSII is a light-driven water plastoquinone oxidoreductase, using light energy to abstract electrons from H(2)O, generating a proton gradient subsequently used for ATP formation. The extrinsic proteins stabilize the structure of photosystem II oxygen-evolving complex (OEC), the ion environment of oxygen evolution and protect the OEC against heat-induced inactivation. This Parasynechococcus marenigrum (strain WH8102) protein is Photosystem II extrinsic protein U.